The chain runs to 121 residues: Large ribosomal subunit protein bL12 (121 aa).

The protein belongs to the bacterial ribosomal protein bL12 family. Homodimer. Part of the ribosomal stalk of the 50S ribosomal subunit. Forms a multimeric L10(L12)X complex, where L10 forms an elongated spine to which 2 to 4 L12 dimers bind in a sequential fashion. Binds GTP-bound translation factors.

Functionally, forms part of the ribosomal stalk which helps the ribosome interact with GTP-bound translation factors. Is thus essential for accurate translation. The chain is Large ribosomal subunit protein bL12 from Pseudomonas putida (strain GB-1).